Reading from the N-terminus, the 284-residue chain is Bifunctional protein FolD (284 aa).

NADP(+) contacts are provided by residues 166-168 and I232; that span reads GAS.

It belongs to the tetrahydrofolate dehydrogenase/cyclohydrolase family. In terms of assembly, homodimer.

It catalyses the reaction (6R)-5,10-methylene-5,6,7,8-tetrahydrofolate + NADP(+) = (6R)-5,10-methenyltetrahydrofolate + NADPH. It carries out the reaction (6R)-5,10-methenyltetrahydrofolate + H2O = (6R)-10-formyltetrahydrofolate + H(+). Its pathway is one-carbon metabolism; tetrahydrofolate interconversion. Its function is as follows. Catalyzes the oxidation of 5,10-methylenetetrahydrofolate to 5,10-methenyltetrahydrofolate and then the hydrolysis of 5,10-methenyltetrahydrofolate to 10-formyltetrahydrofolate. The chain is Bifunctional protein FolD from Pseudomonas entomophila (strain L48).